The sequence spans 475 residues: Squamosa promoter-binding-like protein 12 (475 aa).

The segment at 49 to 73 (NHGSTNSSGGTFTSSSELANGSSKS) is disordered. The segment covering 51-73 (GSTNSSGGTFTSSSELANGSSKS) has biased composition (low complexity). The SBP-type zinc finger occupies 177-254 (SSYCQVEGCK…SDHNARRRKP (78 aa)). Zn(2+)-binding residues include C180, C185, C202, H205, C221, C224, H228, and C240. The Bipartite nuclear localization signal motif lies at 237–253 (KKSCRRRLSDHNARRRK). The interval 437–475 (GGGGFWQDGDDPPPLDHASQAQAFMHPGNGSSSGYGHLH) is disordered. Residues 465–475 (NGSSSGYGHLH) are compositionally biased toward polar residues.

In terms of tissue distribution, expressed in young panicles.

The protein localises to the nucleus. Trans-acting factor that binds specifically to the consensus nucleotide sequence 5'-TNCGTACAA-3'. May be involved in panicle development. The chain is Squamosa promoter-binding-like protein 12 (SPL12) from Oryza sativa subsp. japonica (Rice).